Consider the following 191-residue polypeptide: Methylated-DNA--protein-cysteine methyltransferase (191 aa).

The DNA site is built by Tyr120 and Arg134. The active-site Nucleophile; methyl group acceptor is the Cys151.

This sequence belongs to the MGMT family.

It localises to the nucleus. It carries out the reaction a 6-O-methyl-2'-deoxyguanosine in DNA + L-cysteinyl-[protein] = S-methyl-L-cysteinyl-[protein] + a 2'-deoxyguanosine in DNA. It catalyses the reaction a 4-O-methyl-thymidine in DNA + L-cysteinyl-[protein] = a thymidine in DNA + S-methyl-L-cysteinyl-[protein]. Its function is as follows. Involved in the cellular defense against the biological effects of O6-methylguanine (O6-MeG) and O4-methylthymine (O4-MeT) in DNA. Repairs the methylated nucleobase in DNA by stoichiometrically transferring the methyl group to a cysteine residue in the enzyme. This is a suicide reaction: the enzyme is irreversibly inactivated. This is Methylated-DNA--protein-cysteine methyltransferase (MGT1) from Debaryomyces hansenii (strain ATCC 36239 / CBS 767 / BCRC 21394 / JCM 1990 / NBRC 0083 / IGC 2968) (Yeast).